The sequence spans 258 residues: Probable enoyl-CoA hydratase (258 aa).

This sequence belongs to the enoyl-CoA hydratase/isomerase family.

It catalyses the reaction a (3S)-3-hydroxyacyl-CoA = a (2E)-enoyl-CoA + H2O. It carries out the reaction a 4-saturated-(3S)-3-hydroxyacyl-CoA = a (3E)-enoyl-CoA + H2O. The protein operates within lipid metabolism; fatty acid beta-oxidation. Involved in the degradation of long-chain fatty acids. The protein is Probable enoyl-CoA hydratase (fadB) of Bacillus subtilis (strain 168).